The following is an 858-amino-acid chain: Alanine--tRNA ligase (858 aa).

Zn(2+) is bound by residues His550, His554, Cys652, and His656.

It belongs to the class-II aminoacyl-tRNA synthetase family. Zn(2+) is required as a cofactor.

Its subcellular location is the cytoplasm. It catalyses the reaction tRNA(Ala) + L-alanine + ATP = L-alanyl-tRNA(Ala) + AMP + diphosphate. In terms of biological role, catalyzes the attachment of alanine to tRNA(Ala) in a two-step reaction: alanine is first activated by ATP to form Ala-AMP and then transferred to the acceptor end of tRNA(Ala). Also edits incorrectly charged Ser-tRNA(Ala) and Gly-tRNA(Ala) via its editing domain. The sequence is that of Alanine--tRNA ligase from Pseudothermotoga lettingae (strain ATCC BAA-301 / DSM 14385 / NBRC 107922 / TMO) (Thermotoga lettingae).